Consider the following 443-residue polypeptide: MYGDHRQIWERIVEVIKSELTPTSYNTWLVHIKPLAIIDDVLFLSTPNTFTKNIINGRYINIIYDAASKATNKLYEIKILSEDEEEYREIKESIEKENLTESTTLSTLNPKYTFDTFVVGNSNKLAHAACLAVAQAPAKAYNPLFIYGGVGLGKTHLMHAIGHFINKHQSGYKIMYVTSETFTNELVNSIKDDKNEEFRNKYRNIDVLLIDDIQFIAKKERTQEEFFHTFNTLYEANKQIVISSDRPPKEIPTLEERLRSRFEWGLIADIQPPDYETRIAILKKKAQTENLNIPDEVLAYVAEKIQSNIRELEGALIRIVAFSNLTKANIDLELAKHALKEIVSNKTREITVKLIQEEVCKYYNIKLEDFRSRKRTKNIAYPRQIAMYLARELTDLSLPKIGEEFGKDHTTVIHAYEKISNEIKQDELLSRQIEELKKRIKGY.

A domain I, interacts with DnaA modulators region spans residues 1 to 73; that stretch reads MYGDHRQIWE…YDAASKATNK (73 aa). The interval 73-106 is domain II; that stretch reads KLYEIKILSEDEEEYREIKESIEKENLTESTTLS. Residues 107–323 are domain III, AAA+ region; sequence TLNPKYTFDT…GALIRIVAFS (217 aa). Residues Gly151, Gly153, Lys154, and Thr155 each contribute to the ATP site. The segment at 324–443 is domain IV, binds dsDNA; the sequence is NLTKANIDLE…EELKKRIKGY (120 aa).

Belongs to the DnaA family. In terms of assembly, oligomerizes as a right-handed, spiral filament on DNA at oriC.

It localises to the cytoplasm. In terms of biological role, plays an essential role in the initiation and regulation of chromosomal replication. ATP-DnaA binds to the origin of replication (oriC) to initiate formation of the DNA replication initiation complex once per cell cycle. Binds the DnaA box (a 9 base pair repeat at the origin) and separates the double-stranded (ds)DNA. Forms a right-handed helical filament on oriC DNA; dsDNA binds to the exterior of the filament while single-stranded (ss)DNA is stabiized in the filament's interior. The ATP-DnaA-oriC complex binds and stabilizes one strand of the AT-rich DNA unwinding element (DUE), permitting loading of DNA polymerase. After initiation quickly degrades to an ADP-DnaA complex that is not apt for DNA replication. Binds acidic phospholipids. In Thermoanaerobacter pseudethanolicus (strain ATCC 33223 / 39E) (Clostridium thermohydrosulfuricum), this protein is Chromosomal replication initiator protein DnaA.